Consider the following 396-residue polypeptide: Maltose/maltodextrin-binding periplasmic protein (396 aa).

The N-terminal stretch at 1 to 26 is a signal peptide; that stretch reads MKIKTGARILALSALTTMMFSASALA.

This sequence belongs to the bacterial solute-binding protein 1 family. In terms of assembly, the complex is composed of two ATP-binding proteins (MalK), two transmembrane proteins (MalG and MalF) and a solute-binding protein (MalE).

It localises to the periplasm. In terms of biological role, part of the ABC transporter complex MalEFGK involved in maltose/maltodextrin import. Binds maltose and higher maltodextrins. The chain is Maltose/maltodextrin-binding periplasmic protein (malE) from Klebsiella aerogenes (Enterobacter aerogenes).